Consider the following 535-residue polypeptide: Beta-amylase 1, chloroplastic (535 aa).

A chloroplast-targeting transit peptide spans 1 to 36 (MALNLAQSAAAAACFATAGDARRAASVVAMPSSSSS). Residues Asp-115, His-155, and Asp-163 each contribute to the substrate site. Catalysis depends on Glu-247, which acts as the Proton donor. Substrate is bound by residues Lys-361, His-366, and Thr-408. Residue Glu-446 is the Proton acceptor of the active site. Residues 447–448 (NA) and Arg-480 contribute to the substrate site.

The protein belongs to the glycosyl hydrolase 14 family.

Its subcellular location is the plastid. The protein resides in the chloroplast. The catalysed reaction is Hydrolysis of (1-&gt;4)-alpha-D-glucosidic linkages in polysaccharides so as to remove successive maltose units from the non-reducing ends of the chains.. Its function is as follows. Possesses beta-amylase activity in vitro. May be involved in cold resistance by mediating the accumulation of maltose upon freezing stress, thus contributing to the protection of membranes. This chain is Beta-amylase 1, chloroplastic, found in Oryza sativa subsp. japonica (Rice).